A 192-amino-acid polypeptide reads, in one-letter code: MLPPALNIPKWLEANSHLLQPPVNNYCVYHPSSPATAGYTVMIVGGPNARTDYHINTTPEFFYQYRGSMLLRTVDTSASPPVFQDIPIHEGSLFLLPANTPHCPVRFKDTVGVVMEQPRAEGAVDILRWYCKSCGEIVWEKRFVCTDLGTQVKEVVEEFGADQEKRTCKACGTVAETKYKEGELVQPPRFLE.

O2 is bound at residue R50. Residues H54, E60, and H102 each contribute to the Fe cation site. E60 provides a ligand contact to substrate. Positions 106 and 116 each coordinate substrate. The a divalent metal cation site is built by C131, C134, C168, and C171.

Belongs to the 3-HAO family. Fe(2+) is required as a cofactor.

It is found in the cytoplasm. The enzyme catalyses 3-hydroxyanthranilate + O2 = (2Z,4Z)-2-amino-3-carboxymuconate 6-semialdehyde. It participates in cofactor biosynthesis; NAD(+) biosynthesis; quinolinate from L-kynurenine: step 3/3. Catalyzes the oxidative ring opening of 3-hydroxyanthranilate to 2-amino-3-carboxymuconate semialdehyde, which spontaneously cyclizes to quinolinate. The polypeptide is 3-hydroxyanthranilate 3,4-dioxygenase 1 (bna1-1) (Aspergillus oryzae (strain ATCC 42149 / RIB 40) (Yellow koji mold)).